Reading from the N-terminus, the 402-residue chain is 1-deoxy-D-xylulose 5-phosphate reductoisomerase (402 aa).

NADPH-binding residues include Thr-21, Gly-22, Ser-23, Ile-24, Gly-47, Asn-50, and Asn-127. Lys-128 serves as a coordination point for 1-deoxy-D-xylulose 5-phosphate. Glu-129 is a binding site for NADPH. Asp-151 provides a ligand contact to Mn(2+). Positions 152, 153, 177, and 200 each coordinate 1-deoxy-D-xylulose 5-phosphate. Glu-153 is a Mn(2+) binding site. Position 206 (Gly-206) interacts with NADPH. Ser-213, Asn-218, Lys-219, and Glu-222 together coordinate 1-deoxy-D-xylulose 5-phosphate. Glu-222 contacts Mn(2+).

The protein belongs to the DXR family. It depends on Mg(2+) as a cofactor. Requires Mn(2+) as cofactor.

The catalysed reaction is 2-C-methyl-D-erythritol 4-phosphate + NADP(+) = 1-deoxy-D-xylulose 5-phosphate + NADPH + H(+). It participates in isoprenoid biosynthesis; isopentenyl diphosphate biosynthesis via DXP pathway; isopentenyl diphosphate from 1-deoxy-D-xylulose 5-phosphate: step 1/6. Functionally, catalyzes the NADPH-dependent rearrangement and reduction of 1-deoxy-D-xylulose-5-phosphate (DXP) to 2-C-methyl-D-erythritol 4-phosphate (MEP). This chain is 1-deoxy-D-xylulose 5-phosphate reductoisomerase, found in Mycobacterium marinum (strain ATCC BAA-535 / M).